The sequence spans 99 residues: Nucleoid-associated protein SSA_0326 (99 aa).

The segment covering 1 to 15 (MMNMQSMMKQAQKLQ) has biased composition (low complexity). A disordered region spans residues 1–23 (MMNMQSMMKQAQKLQKQMEKGQA).

The protein belongs to the YbaB/EbfC family. As to quaternary structure, homodimer.

It is found in the cytoplasm. The protein localises to the nucleoid. Functionally, binds to DNA and alters its conformation. May be involved in regulation of gene expression, nucleoid organization and DNA protection. The protein is Nucleoid-associated protein SSA_0326 of Streptococcus sanguinis (strain SK36).